The primary structure comprises 129 residues: MTALMVRIRQEHRSIAEEVTQLFRETHEFLSATTAHRQEQAKQQAQQLHQFHQNLEQTTHEFLTETTTQRVAQAEAQANFLHKFHQNLEQTTQEFLAETAKNRTEQAKAQSQYLQQFRKDLFASIFGTF.

3 consecutive repeats follow at residues 19 to 51 (VTQL…LHQF), 52 to 84 (HQNL…LHKF), and 85 to 117 (HQNL…LQQF). The interval 19 to 117 (VTQLFRETHE…KAQSQYLQQF (99 aa)) is 3 X 33 AA tandem repeats.

Belongs to the gas vesicle GvpC family.

The protein resides in the gas vesicle. Functionally, confers stability, involved in shaping gas vesicles, hollow, gas filled proteinaceous nanostructures. During planktonic growth they allow positioning of the organism at a favorable depth for light or nutrient acquisition. Cluster expression in E.coli (gvpA1-gvpA2-gvpC-gvpN-gvpJ-gvpK-gvpF-gvpG-gvpV-gvpW) allows cells to float and produces irregularly shaped gas vesicles. This Nostoc sp. (strain PCC 7120 / SAG 25.82 / UTEX 2576) protein is Gas vesicle protein C.